A 52-amino-acid chain; its full sequence is MEQWKCNICGYIYNPETGDPEGDIPAGTSFESLPDSWMCPVCGAGKEEFTKI.

The region spanning M1 to I52 is the Rubredoxin-like domain. Residues C6, C9, C39, and C42 each contribute to the Fe cation site.

The protein belongs to the rubredoxin family. As to quaternary structure, monomer. The cofactor is Fe(3+).

Serves as an electron acceptor for pyruvate ferredoxin oxidoreductase (PFOR). The sequence is that of Rubredoxin-2 (rub2) from Chlorobaculum tepidum (strain ATCC 49652 / DSM 12025 / NBRC 103806 / TLS) (Chlorobium tepidum).